A 419-amino-acid polypeptide reads, in one-letter code: Maltoporin 2 (419 aa).

The first 23 residues, 1 to 23 (MKTSLRTLSVALAAALVSPSVLA), serve as a signal peptide directing secretion.

The protein belongs to the porin LamB (TC 1.B.3) family. In terms of assembly, homotrimer formed of three 18-stranded antiparallel beta-barrels, containing three independent channels.

Its subcellular location is the cell outer membrane. It catalyses the reaction beta-maltose(in) = beta-maltose(out). In terms of biological role, involved in the transport of maltose and maltodextrins. The protein is Maltoporin 2 of Yersinia pseudotuberculosis serotype O:1b (strain IP 31758).